The following is a 402-amino-acid chain: Succinyl-diaminopimelate desuccinylase (402 aa).

His-88 provides a ligand contact to Zn(2+). The active site involves Asp-90. A Zn(2+)-binding site is contributed by Asp-121. Glu-155 (proton acceptor) is an active-site residue. Positions 156, 184, and 374 each coordinate Zn(2+).

Belongs to the peptidase M20A family. DapE subfamily. Homodimer. Requires Zn(2+) as cofactor. It depends on Co(2+) as a cofactor.

The catalysed reaction is N-succinyl-(2S,6S)-2,6-diaminopimelate + H2O = (2S,6S)-2,6-diaminopimelate + succinate. It functions in the pathway amino-acid biosynthesis; L-lysine biosynthesis via DAP pathway; LL-2,6-diaminopimelate from (S)-tetrahydrodipicolinate (succinylase route): step 3/3. Its function is as follows. Catalyzes the hydrolysis of N-succinyl-L,L-diaminopimelic acid (SDAP), forming succinate and LL-2,6-diaminopimelate (DAP), an intermediate involved in the bacterial biosynthesis of lysine and meso-diaminopimelic acid, an essential component of bacterial cell walls. The chain is Succinyl-diaminopimelate desuccinylase from Psychrobacter sp. (strain PRwf-1).